Reading from the N-terminus, the 699-residue chain is Elongation factor G (699 aa).

A tr-type G domain is found at 8–290; the sequence is ERYRNIGIMA…AVLDYLPSPV (283 aa). GTP-binding positions include 17–24, 88–92, and 142–145; these read AHIDAGKT, DTPGH, and NKMD.

This sequence belongs to the TRAFAC class translation factor GTPase superfamily. Classic translation factor GTPase family. EF-G/EF-2 subfamily.

The protein resides in the cytoplasm. In terms of biological role, catalyzes the GTP-dependent ribosomal translocation step during translation elongation. During this step, the ribosome changes from the pre-translocational (PRE) to the post-translocational (POST) state as the newly formed A-site-bound peptidyl-tRNA and P-site-bound deacylated tRNA move to the P and E sites, respectively. Catalyzes the coordinated movement of the two tRNA molecules, the mRNA and conformational changes in the ribosome. This Acidithiobacillus ferrooxidans (strain ATCC 23270 / DSM 14882 / CIP 104768 / NCIMB 8455) (Ferrobacillus ferrooxidans (strain ATCC 23270)) protein is Elongation factor G.